A 232-amino-acid polypeptide reads, in one-letter code: Ribonuclease 3 (232 aa).

One can recognise an RNase III domain in the interval Q5–D134. E47 serves as a coordination point for Mg(2+). Residue D51 is part of the active site. Mg(2+) is bound by residues D120 and E123. The active site involves E123. The DRBM domain maps to D160–D229.

This sequence belongs to the ribonuclease III family. As to quaternary structure, homodimer. Requires Mg(2+) as cofactor.

The protein localises to the cytoplasm. It carries out the reaction Endonucleolytic cleavage to 5'-phosphomonoester.. Its function is as follows. Digests double-stranded RNA. Involved in the processing of primary rRNA transcript to yield the immediate precursors to the large and small rRNAs (23S and 16S). Processes some mRNAs, and tRNAs when they are encoded in the rRNA operon. Processes pre-crRNA and tracrRNA of type II CRISPR loci if present in the organism. This is Ribonuclease 3 from Streptococcus pneumoniae (strain CGSP14).